A 147-amino-acid polypeptide reads, in one-letter code: Bis(5'-nucleosyl)-tetraphosphatase [asymmetrical] (147 aa).

One can recognise a Nudix hydrolase domain in the interval 1-139; sequence MALRACGLII…EMKAALQEGH (139 aa). Ala2 carries the N-acetylalanine modification. Residues 43 to 64 carry the Nudix box motif; the sequence is GHVEPGEDDLETALRETQEEAG.

It belongs to the Nudix hydrolase family. It depends on a divalent metal cation as a cofactor.

It carries out the reaction P(1),P(4)-bis(5'-guanosyl) tetraphosphate + H2O = GMP + GTP + 2 H(+). The catalysed reaction is a 5'-end CoA-ribonucleoside in mRNA + H2O = a 5'-end phospho-adenosine-phospho-ribonucleoside in mRNA + (R)-4'-phosphopantetheine + 2 H(+). It catalyses the reaction a 5'-end FAD-phospho-ribonucleoside in mRNA + H2O = a 5'-end phospho-adenosine-phospho-ribonucleoside in mRNA + FMN + 2 H(+). Its function is as follows. Catalyzes the asymmetric hydrolysis of diadenosine 5',5'''-P1,P4-tetraphosphate (Ap4A) to yield AMP and ATP. Exhibits decapping activity towards FAD-capped RNAs and dpCoA-capped RNAs in vitro. This is Bis(5'-nucleosyl)-tetraphosphatase [asymmetrical] (NUDT2) from Homo sapiens (Human).